The primary structure comprises 496 residues: Probable G-protein coupled receptor Mth-like 5 (496 aa).

Residues 1–219 (MLVKTLGAHF…SNFLLRKILN (219 aa)) are Extracellular-facing. N-linked (GlcNAc...) asparagine glycosylation occurs at Asn-82. The helical transmembrane segment at 220 to 240 (PIFHGISLVILLVIAIIYFIL) threads the bilayer. Topologically, residues 241-246 (PTLRDL) are cytoplasmic. A helical transmembrane segment spans residues 247-267 (VGNIVTTIAMCLMVSQAADLV). Residues 268 to 276 (RIFTELTSH) lie on the Extracellular side of the membrane. The chain crosses the membrane as a helical span at residues 277–297 (VSFIVADIILCFSLLAAFFWL). The Cytoplasmic segment spans residues 298-327 (NSFGFYIWKTFRSRNVFLRVTDGRKYCYYS). A helical membrane pass occupies residues 328–348 (AYAWGCTATMAALAVFAHFFL). Topologically, residues 349 to 366 (DAESYKQEHMVGEQETIG) are extracellular. A helical transmembrane segment spans residues 367 to 387 (WLGICIFFAPIACTILVNIFF). The Cytoplasmic portion of the chain corresponds to 388-411 (YVTTRKLINRRTVYGRIAHKLKAN). A helical membrane pass occupies residues 412 to 432 (FIMFSLMLLVMSIAWLFLIMS). Topologically, residues 433-438 (WLQMEG) are extracellular. A helical membrane pass occupies residues 439–459 (LLYAHIVVNALQTPLLLYICV). Over 460-496 (LRQRHVTFLLKKTCCYNEPPSANDWGDELHYMNGNDY) the chain is Cytoplasmic.

The protein belongs to the G-protein coupled receptor 2 family. Mth subfamily.

It localises to the cell membrane. This chain is Probable G-protein coupled receptor Mth-like 5 (mthl5), found in Drosophila melanogaster (Fruit fly).